Consider the following 178-residue polypeptide: uncharacterized protein (178 aa).

Residues 9–173 enclose the N-acetyltransferase domain; it reads LTLRKMELED…IDVYMFSLLK (165 aa).

This is an uncharacterized protein from Bacillus licheniformis.